A 304-amino-acid polypeptide reads, in one-letter code: Probable phytol kinase 2, chloroplastic (304 aa).

The transit peptide at 1–59 (MVSLISAHLLSLPSSAPRSRPQSRPPLSPPAAAAAASCSFDLPRPRRLVADGSRRKGTM) directs the protein to the chloroplast. Helical transmembrane passes span 68–88 (SGLAHDLGSAAVTAGVALALL), 113–133 (IGMVFLLFWPLFSSGSYAPFL), 134–154 (AAVAPGINIIRMLLLGLGVMK), 170–190 (ELLKGPLYYATTITFATSIFW), 194–214 (PIAIALICNLCAGDGIADIVG), 231–251 (AGSIAMALAGFMASIGYMHYF), and 256–276 (FIEESWSLAFGFLVVSVTAAL).

This sequence belongs to the polyprenol kinase family.

Its subcellular location is the plastid. The protein resides in the chloroplast membrane. It carries out the reaction phytol + CTP = phytyl phosphate + CDP + H(+). It participates in cofactor biosynthesis; tocopherol biosynthesis. In terms of biological role, involved in the activation and reutilization of phytol from chlorophyll degradation in plant metabolism, including tocopherol biosynthesis. Catalyzes the conversion of phytol to phytol monophosphate (PMP). This is Probable phytol kinase 2, chloroplastic from Oryza sativa subsp. japonica (Rice).